The sequence spans 193 residues: Mediator of RNA polymerase II transcription subunit 11 (193 aa).

Positions 31–68 (AREIMQDLGKEKQISKNKMDDNANSFKKLITQVENELS) form a coiled coil. Residues 115 to 193 (IEPPTQEVDE…EEEEGEQMEN (79 aa)) are disordered. The segment covering 121-143 (EVDEDNEDEEDSGDADMLEETPE) has biased composition (acidic residues). Low complexity predominate over residues 150-175 (TTSSSATTSDGGSGGADDAASSSAPR). Positions 184–193 (EEEEGEQMEN) are enriched in acidic residues.

The protein belongs to the Mediator complex subunit 11 family. In terms of assembly, component of the Mediator complex.

It is found in the nucleus. Functionally, component of the Mediator complex, a coactivator involved in the regulated transcription of nearly all RNA polymerase II-dependent genes. Mediator functions as a bridge to convey information from gene-specific regulatory proteins to the basal RNA polymerase II transcription machinery. Mediator is recruited to promoters by direct interactions with regulatory proteins and serves as a scaffold for the assembly of a functional pre-initiation complex with RNA polymerase II and the general transcription factors. The sequence is that of Mediator of RNA polymerase II transcription subunit 11 (mdt-11) from Caenorhabditis briggsae.